A 211-amino-acid polypeptide reads, in one-letter code: MVDKDEEQIKQNVEEDLSSTVEQTGEENIEFPSAPNHPKQVLVTDEELKALKKEATEYKDKYLRLLADSENARKRLQKERQEISRYALENMVVDFLKPLDNLENALKFAQGMSDEVKNWAFGFQMILTQFKDVLASNGITALESQGTFFDPHLHEAIEMVETDSYAPGIIVEENVRGYKMGDRMIRPARVKVAKAISAIDPQDKSELNENN.

Residues 1–13 are compositionally biased toward basic and acidic residues; the sequence is MVDKDEEQIKQNV. The tract at residues 1–38 is disordered; sequence MVDKDEEQIKQNVEEDLSSTVEQTGEENIEFPSAPNHP.

This sequence belongs to the GrpE family. Homodimer.

It localises to the cytoplasm. Its function is as follows. Participates actively in the response to hyperosmotic and heat shock by preventing the aggregation of stress-denatured proteins, in association with DnaK and GrpE. It is the nucleotide exchange factor for DnaK and may function as a thermosensor. Unfolded proteins bind initially to DnaJ; upon interaction with the DnaJ-bound protein, DnaK hydrolyzes its bound ATP, resulting in the formation of a stable complex. GrpE releases ADP from DnaK; ATP binding to DnaK triggers the release of the substrate protein, thus completing the reaction cycle. Several rounds of ATP-dependent interactions between DnaJ, DnaK and GrpE are required for fully efficient folding. The sequence is that of Protein GrpE from Protochlamydia amoebophila (strain UWE25).